A 1040-amino-acid polypeptide reads, in one-letter code: Multidrug resistance protein MdtB (1040 aa).

The next 11 helical transmembrane spans lie at 15–37, 345–362, 367–389, 396–418, 438–460, 472–494, 535–557, 867–889, 909–931, 968–990, and 1000–1022; these read LFIL…GIIG, FELM…YLFL, ATII…MVFL, LTLM…VIEN, GEIG…PLLF, FAVT…TPMM, HPWL…WIVI, VWLI…ESFI, LIIA…IGIV, ILMT…GVGT, and MVGG…YLLF.

The protein belongs to the resistance-nodulation-cell division (RND) (TC 2.A.6) family. MdtB subfamily. As to quaternary structure, part of a tripartite efflux system composed of MdtA, MdtB and MdtC. MdtB forms a heteromultimer with MdtC.

Its subcellular location is the cell inner membrane. This is Multidrug resistance protein MdtB from Salmonella typhimurium (strain LT2 / SGSC1412 / ATCC 700720).